Here is an 882-residue protein sequence, read N- to C-terminus: MEHMKSAEIRRRFLDFFAERDHRIYPSSSLIPHDDPTVLLTTAGVQQFIPYFLGQEKPPHPRAASVQKCFRTQDLEEVGDPSHLTFFEMLGNFSFGDYFKKEAIGWAWEFLTEGLGIPPERLWVTIFEGDENAPEDLEAKRFWMEVGVPEHKIFGLPKSENWWGPAGETGPCGPCSEIYYDYGEEFGPGDPLEDARYGPGGEEGDARFLEVWNLVFNQYEQLRDGSLRPLEQTGIDTGMGLERIAAVMQGARSVYETDLYAPVIERAREYTGVALGDGEETDRALRILADHARGMAFLIADGVRPGNQRREYVLRRIIRRATREAYGRFGLDAGRIASLAETVADYMGGFWGELREARDEIRRVVESEAARFIDIYHSGMRLLEAEISRLEGGRFPGEVAFTLHDTYGFPVEVTREVLAERGISLDEAGFRRAMERQRERAREALEGHERAVAAFRDREIRSRFVGYEREQAETRILAIEPVPDAEGELYLVLEENPFYATGGGQVADTGWISSEKGQLEVVDAIPAGDYQVLRARVERGRFEAGDEVVASINRVRRQQIEANHTATHILHWALRAVLGKEVVQAGSYVGPDRLRFDYRYSGRVTEEELARVQELCLLKITENQPVRYYTTTLEEARKLGAIMLFGEKYGELVRVVEVDGFSRELCGGTHVRGTAEIGAFKITSNRRHGADLYRIEVITGREALYYLTRAAETAERLAAELRLPGVEELPEAVSRLREELQQAREELRQQALKRGLEEVGSLVENAESIDGTKVVTGRVAAADVRDLRQISDDVRNRVGGPVAVVLAADLDGKAVLVANFHPEVSKRVKAGDVVREAAGILGGGGGGSPTMAQAGGGNLEAIPAALERVRQILSRELSGREA.

Zn(2+) contacts are provided by His564, His568, Cys666, and His670.

It belongs to the class-II aminoacyl-tRNA synthetase family. The cofactor is Zn(2+).

It localises to the cytoplasm. It catalyses the reaction tRNA(Ala) + L-alanine + ATP = L-alanyl-tRNA(Ala) + AMP + diphosphate. Functionally, catalyzes the attachment of alanine to tRNA(Ala) in a two-step reaction: alanine is first activated by ATP to form Ala-AMP and then transferred to the acceptor end of tRNA(Ala). Also edits incorrectly charged Ser-tRNA(Ala) and Gly-tRNA(Ala) via its editing domain. This is Alanine--tRNA ligase from Rubrobacter xylanophilus (strain DSM 9941 / JCM 11954 / NBRC 16129 / PRD-1).